A 244-amino-acid polypeptide reads, in one-letter code: Protein IN2-1 homolog B (244 aa).

The tract at residues 1 to 27 (MAAAAAAPASSEKEVLPPSLTSSSEPP) is disordered. One can recognise a GST N-terminal domain in the interval 32–113 (GTTRLYVAYH…YIDTNFEGPA (82 aa)). Glutathione-binding positions include V85 and 97–98 (ES). The 124-residue stretch at 118 to 241 (DSEKQQFAEE…FLLEHTKKRL (124 aa)) folds into the GST C-terminal domain.

The polypeptide is Protein IN2-1 homolog B (GSTZ5) (Oryza sativa subsp. indica (Rice)).